Consider the following 202-residue polypeptide: MSEEALGELSGYIRERLGDAIEEANLAYGELTLCVPVASLIGVLTFLRDDVQCQFVNLTDISGVDYPQREKRFDVVYQLLSPRQNQRIRVKVQADEDTLVPSAVPVFFGAEWYEREAYDMYGILFSGHPDLRRILTDYGFEGHPLRKDFPLTGFVEVRYNDELKRVVYEPVQLRQEFRNFDFLSPWEGTDYVLPGDEKAKTN.

This sequence belongs to the complex I 30 kDa subunit family. NDH-1 is composed of 14 different subunits. Subunits NuoB, C, D, E, F, and G constitute the peripheral sector of the complex.

It is found in the cell inner membrane. It catalyses the reaction a quinone + NADH + 5 H(+)(in) = a quinol + NAD(+) + 4 H(+)(out). NDH-1 shuttles electrons from NADH, via FMN and iron-sulfur (Fe-S) centers, to quinones in the respiratory chain. The immediate electron acceptor for the enzyme in this species is believed to be ubiquinone. Couples the redox reaction to proton translocation (for every two electrons transferred, four hydrogen ions are translocated across the cytoplasmic membrane), and thus conserves the redox energy in a proton gradient. The protein is NADH-quinone oxidoreductase subunit C of Brucella canis (strain ATCC 23365 / NCTC 10854 / RM-666).